We begin with the raw amino-acid sequence, 296 residues long: Large ribosomal subunit protein uL29m (296 aa).

The N-terminal 19 residues, 1–19 (MSITSIRALLRSAVSLART), are a transit peptide targeting the mitochondrion.

Belongs to the universal ribosomal protein uL29 family. As to quaternary structure, component of the mitochondrial large ribosomal subunit. Mature mitochondrial ribosomes consist of a small (37S) and a large (54S) subunit. The 37S subunit contains at least 33 different proteins and 1 molecule of RNA (15S). The 54S subunit contains at least 45 different proteins and 1 molecule of RNA (21S).

Its subcellular location is the mitochondrion. The sequence is that of Large ribosomal subunit protein uL29m (MRPL4) from Lodderomyces elongisporus (strain ATCC 11503 / CBS 2605 / JCM 1781 / NBRC 1676 / NRRL YB-4239) (Yeast).